Reading from the N-terminus, the 330-residue chain is Autoinducer 2 import system permease protein LsrD (330 aa).

The Cytoplasmic segment spans residues M1 to R4. Residues Y5–I25 form a helical membrane-spanning segment. Residues N26–F42 lie on the Periplasmic side of the membrane. The helical transmembrane segment at I43–I63 threads the bilayer. Topologically, residues S64–S67 are cytoplasmic. A run of 2 helical transmembrane segments spans residues T68–L88 and A89–I109. At Y110–P115 the chain is on the cytoplasmic side. A helical membrane pass occupies residues L116–M136. Over A137 to D159 the chain is Periplasmic. A helical membrane pass occupies residues V160–W180. Over L181–R209 the chain is Cytoplasmic. Residues T210–V230 traverse the membrane as a helical segment. Residues S231 to R237 lie on the Periplasmic side of the membrane. The next 2 membrane-spanning stretches (helical) occupy residues S238 to N258 and I259 to L279. At Q280–M285 the chain is on the periplasmic side. The chain crosses the membrane as a helical span at residues A286–V306. At G307 to P330 the chain is on the cytoplasmic side.

It belongs to the binding-protein-dependent transport system permease family. AraH/RbsC subfamily. As to quaternary structure, the complex is composed of two ATP-binding proteins (LsrA), two transmembrane proteins (LsrC and LsrD) and a solute-binding protein (LsrB).

It is found in the cell inner membrane. Its function is as follows. Part of the ABC transporter complex LsrABCD involved in autoinducer 2 (AI-2) import. Probably responsible for the translocation of the substrate across the membrane. The chain is Autoinducer 2 import system permease protein LsrD (lsrD) from Escherichia coli O157:H7.